Consider the following 285-residue polypeptide: Baculoviral IAP repeat-containing protein 7 (285 aa).

The segment at 18–47 is disordered; that stretch reads ESRARDSVRGPELSHREDGSGRTQEQDKPH. Over residues 19–47 the composition is skewed to basic and acidic residues; the sequence is SRARDSVRGPELSHREDGSGRTQEQDKPH. The stretch at 96–161 is one BIR repeat; it reads RLASFYDWPS…RWFPRCQFLL (66 aa). Zn(2+) contacts are provided by Cys-130, Cys-133, His-150, and Cys-157. Residues 184-225 are disordered; it reads QREEPEDAVSATPSAPAHGSPELLRSRRETQPEDVSEPGAKD. The RING-type zinc finger occupies 239–273; sequence CKVCLDRAVSIVFVPCGHFVCTECAPNLQLCPICR.

It belongs to the IAP family. In terms of assembly, binds to caspase-9. Interaction with DIABLO/SMAC via the BIR domain disrupts binding to caspase-9 and apoptotic suppressor activity. Interacts with TAB1. In vitro, interacts with caspase-3 and caspase-7 via its BIR domain. In terms of processing, autoubiquitinated and undergoes proteasome-mediated degradation. Post-translationally, the truncated protein (tLivin) not only loses its anti-apoptotic effect but also acquires a pro-apoptotic effect.

It is found in the nucleus. The protein localises to the cytoplasm. The protein resides in the golgi apparatus. The catalysed reaction is S-ubiquitinyl-[E2 ubiquitin-conjugating enzyme]-L-cysteine + [acceptor protein]-L-lysine = [E2 ubiquitin-conjugating enzyme]-L-cysteine + N(6)-ubiquitinyl-[acceptor protein]-L-lysine.. Its function is as follows. Apoptotic regulator capable of exerting proapoptotic and anti-apoptotic activities and plays crucial roles in apoptosis, cell proliferation, and cell cycle control. Its anti-apoptotic activity is mediated through the inhibition of CASP3, CASP7 and CASP9, as well as by its E3 ubiquitin-protein ligase activity. As it is a weak caspase inhibitor, its anti-apoptotic activity is thought to be due to its ability to ubiquitinate DIABLO/SMAC targeting it for degradation thereby promoting cell survival. May contribute to caspase inhibition, by blocking the ability of DIABLO/SMAC to disrupt XIAP/BIRC4-caspase interactions. Protects against apoptosis induced by TNF or by chemical agents such as adriamycin, etoposide or staurosporine. Suppression of apoptosis is mediated by activation of MAPK8/JNK1, and possibly also of MAPK9/JNK2. This activation depends on TAB1 and MAP3K7/TAK1. In vitro, inhibits CASP3 and proteolytic activation of pro-CASP9. This is Baculoviral IAP repeat-containing protein 7 (Birc7) from Mus musculus (Mouse).